Here is a 104-residue protein sequence, read N- to C-terminus: L-rhamnose mutarotase (104 aa).

Tyr18 provides a ligand contact to substrate. Catalysis depends on His22, which acts as the Proton donor. Substrate is bound by residues Tyr41 and 76–77 (WW).

It belongs to the rhamnose mutarotase family. In terms of assembly, homodimer.

The protein resides in the cytoplasm. It carries out the reaction alpha-L-rhamnose = beta-L-rhamnose. Its pathway is carbohydrate metabolism; L-rhamnose metabolism. Functionally, involved in the anomeric conversion of L-rhamnose. The polypeptide is L-rhamnose mutarotase (Enterobacter sp. (strain 638)).